Reading from the N-terminus, the 97-residue chain is Plasmid stability protein StbC (97 aa).

Functionally, involved in plasmid stability. In Pseudomonas syringae pv. tomato (strain ATCC BAA-871 / DC3000), this protein is Plasmid stability protein StbC (stbC).